Reading from the N-terminus, the 292-residue chain is Polyisoprenoid diphosphate/phosphate phosphohydrolase PLPP6 (292 aa).

Disordered regions lie at residues 1–34 and 66–86; these read MPSP…SGGG and GSFP…PPED. Residues 1–131 are Cytoplasmic-facing; that stretch reads MPSPRRTIEG…SAWGSVRPLM (131 aa). The segment covering 10–25 has biased composition (low complexity); sequence GRPLGSSGGSSVPGSP. Phosphoserine is present on residues Ser-24 and Ser-67. Residues 69 to 79 are compositionally biased toward low complexity; it reads PLAASGPAQAA. Residues 132 to 152 traverse the membrane as a helical segment; the sequence is KLLEISGHGIPWLLGTLYCLL. Residues 153–161 lie on the Lumenal side of the membrane; it reads RSDSWAGRE. Residues 162-182 traverse the membrane as a helical segment; the sequence is VLMNLLFALLLDLLLVAVIKG. The phosphatase sequence motif I stretch occupies residues 181-189; sequence KGLVRRRRP. Residues 183-225 lie on the Cytoplasmic side of the membrane; it reads LVRRRRPAHNQKDMFFTLSVDRYSFPSGHATRAALVSRFILNH. The interval 208–211 is phosphatase sequence motif II; that stretch reads PSGH. His-211 functions as the Proton donors in the catalytic mechanism. A helical transmembrane segment spans residues 226–246; the sequence is LVLAIPLRVLVVLWAFVLGLS. Residues 246 to 257 form a phosphatase sequence motif III region; sequence SRVMLGRHNVTD. The Lumenal portion of the chain corresponds to 247–257; that stretch reads RVMLGRHNVTD. The active-site Nucleophile is His-253. The helical transmembrane segment at 258 to 278 threads the bilayer; sequence VAFGFFLGYMQYSIVDYCWLS. At 279–292 the chain is on the cytoplasmic side; that stretch reads PHNVPVLFVLWNQQ.

This sequence belongs to the PA-phosphatase related phosphoesterase family. In terms of processing, phosphorylation by PKC activates the phosphatase activity towards presqualene diphosphate.

The protein resides in the endoplasmic reticulum membrane. Its subcellular location is the nucleus envelope. The protein localises to the nucleus inner membrane. It carries out the reaction presqualene diphosphate + H2O = presqualene phosphate + phosphate + H(+). The catalysed reaction is presqualene phosphate + H2O = presqualene alcohol + phosphate. The enzyme catalyses (2E,6E)-farnesyl diphosphate + H2O = (2E,6E)-farnesyl phosphate + phosphate + H(+). It catalyses the reaction (2E,6E)-farnesyl phosphate + H2O = (2E,6E)-farnesol + phosphate. It carries out the reaction (2E,6E,10E)-geranylgeranyl diphosphate + H2O = (2E,6E,10E)-geranylgeranyl phosphate + phosphate + H(+). The catalysed reaction is (2E,6E,10E)-geranylgeranyl phosphate + H2O = (2E,6E,10E)-geranylgeraniol + phosphate. The enzyme catalyses (2E)-geranyl diphosphate + H2O = (2E)-geranyl phosphate + phosphate + H(+). It catalyses the reaction (2E)-geranyl phosphate + H2O = (2E)-geraniol + phosphate. It carries out the reaction 1,2-dihexadecanoyl-sn-glycero-3-phosphate + H2O = 1,2-dihexadecanoyl-sn-glycerol + phosphate. Magnesium-independent polyisoprenoid diphosphatase that catalyzes the sequential dephosphorylation of presqualene, farnesyl, geranyl and geranylgeranyl diphosphates. Functions in the innate immune response through the dephosphorylation of presqualene diphosphate which acts as a potent inhibitor of the signaling pathways contributing to polymorphonuclear neutrophils activation. May regulate the biosynthesis of cholesterol and related sterols by dephosphorylating presqualene and farnesyl diphosphate, two key intermediates in this biosynthetic pathway. May also play a role in protein prenylation by acting on farnesyl diphosphate and its derivative geranylgeranyl diphosphate, two precursors for the addition of isoprenoid anchors to membrane proteins. Has a lower activity towards phosphatidic acid (PA), but through phosphatidic acid dephosphorylation may participate in the biosynthesis of phospholipids and triacylglycerols. May also act on ceramide-1-P, lysophosphatidic acid (LPA) and sphing-4-enine 1-phosphate/sphingosine-1-phosphate. This is Polyisoprenoid diphosphate/phosphate phosphohydrolase PLPP6 from Mus musculus (Mouse).